The following is a 374-amino-acid chain: Chaperone protein DnaJ (374 aa).

One can recognise a J domain in the interval 4–69; it reads DFYETLCVSR…QKRAAYDRFG (66 aa). The segment at 131–210 adopts a CR-type zinc-finger fold; the sequence is GKTAQIRVPT…CSGQGRLTEE (80 aa). Zn(2+) is bound by residues Cys144, Cys147, Cys161, Cys164, Cys184, Cys187, Cys198, and Cys201. CXXCXGXG motif repeat units lie at residues 144-151, 161-168, 184-191, and 198-205; these read CDECAGSG, CPMCHGAG, CPQCQGRG, and CRKCSGQG.

It belongs to the DnaJ family. In terms of assembly, homodimer. The cofactor is Zn(2+).

The protein localises to the cytoplasm. Participates actively in the response to hyperosmotic and heat shock by preventing the aggregation of stress-denatured proteins and by disaggregating proteins, also in an autonomous, DnaK-independent fashion. Unfolded proteins bind initially to DnaJ; upon interaction with the DnaJ-bound protein, DnaK hydrolyzes its bound ATP, resulting in the formation of a stable complex. GrpE releases ADP from DnaK; ATP binding to DnaK triggers the release of the substrate protein, thus completing the reaction cycle. Several rounds of ATP-dependent interactions between DnaJ, DnaK and GrpE are required for fully efficient folding. Also involved, together with DnaK and GrpE, in the DNA replication of plasmids through activation of initiation proteins. This is Chaperone protein DnaJ from Chelativorans sp. (strain BNC1).